Reading from the N-terminus, the 80-residue chain is Metallothionein-like protein type 2 (80 aa).

Belongs to the metallothionein superfamily. Type 15 family.

Its function is as follows. Metallothioneins have a high content of cysteine residues that bind various heavy metals. The protein is Metallothionein-like protein type 2 of Brassica campestris (Field mustard).